We begin with the raw amino-acid sequence, 385 residues long: Multidrug resistance protein MdtE (385 aa).

Positions 1–20 are cleaved as a signal peptide; that stretch reads MNRRRKLLIPLLFCGAMLTA. Cys21 carries N-palmitoyl cysteine lipidation. Cys21 is lipidated: S-diacylglycerol cysteine.

This sequence belongs to the membrane fusion protein (MFP) (TC 8.A.1) family. In terms of assembly, homotrimer. Part of the tripartite efflux system MdtEF-TolC, which is composed of an inner membrane transporter, MdtF, a membrane fusion protein, MdtE, and an outer membrane component, TolC. The complex forms a large protein conduit and can translocate molecules across both the inner and outer membranes.

The protein localises to the cell inner membrane. Functionally, part of the tripartite efflux system MdtEF-TolC, which confers resistance to various compounds. The polypeptide is Multidrug resistance protein MdtE (mdtE) (Escherichia coli O157:H7).